The sequence spans 241 residues: Lipoprotein MxiJ (241 aa).

Residues 1 to 17 (MIRYKGFILFLLLMLIG) form the signal peptide. C18 is lipidated: N-palmitoyl cysteine. The S-diacylglycerol cysteine moiety is linked to residue C18.

The protein belongs to the YscJ lipoprotein family.

Its subcellular location is the cell outer membrane. Involved in the secretion of the Ipa antigens. The chain is Lipoprotein MxiJ (mxiJ) from Shigella sonnei.